A 95-amino-acid polypeptide reads, in one-letter code: CRISPR-associated endoribonuclease Cas2 (95 aa).

Asp-10 is a Mg(2+) binding site.

It belongs to the CRISPR-associated endoribonuclease Cas2 protein family. In terms of assembly, homodimer, forms a heterotetramer with a Cas1 homodimer. Requires Mg(2+) as cofactor.

In terms of biological role, CRISPR (clustered regularly interspaced short palindromic repeat), is an adaptive immune system that provides protection against mobile genetic elements (viruses, transposable elements and conjugative plasmids). CRISPR clusters contain sequences complementary to antecedent mobile elements and target invading nucleic acids. CRISPR clusters are transcribed and processed into CRISPR RNA (crRNA). Functions as a ssRNA-specific endoribonuclease. Involved in the integration of spacer DNA into the CRISPR cassette. This is CRISPR-associated endoribonuclease Cas2 from Geobacter sulfurreducens (strain ATCC 51573 / DSM 12127 / PCA).